The chain runs to 400 residues: Probable peptidoglycan glycosyltransferase FtsW (400 aa).

Transmembrane regions (helical) follow at residues 30–50, 65–84, 92–112, 123–143, 157–177, 179–199, 201–221, 247–267, 280–300, 321–341, and 356–376; these read LSVL…SIGI, QAAY…RIRL, GLLL…GVGV, LGLF…LYLA, FAGF…LLME, DFGA…LAGA, LWQF…LAIT, TQSL…GASV, FLFA…VVLL, LFGA…AFIN, and LPLM…VGLL.

Belongs to the SEDS family. FtsW subfamily.

The protein resides in the cell inner membrane. It catalyses the reaction [GlcNAc-(1-&gt;4)-Mur2Ac(oyl-L-Ala-gamma-D-Glu-L-Lys-D-Ala-D-Ala)](n)-di-trans,octa-cis-undecaprenyl diphosphate + beta-D-GlcNAc-(1-&gt;4)-Mur2Ac(oyl-L-Ala-gamma-D-Glu-L-Lys-D-Ala-D-Ala)-di-trans,octa-cis-undecaprenyl diphosphate = [GlcNAc-(1-&gt;4)-Mur2Ac(oyl-L-Ala-gamma-D-Glu-L-Lys-D-Ala-D-Ala)](n+1)-di-trans,octa-cis-undecaprenyl diphosphate + di-trans,octa-cis-undecaprenyl diphosphate + H(+). It functions in the pathway cell wall biogenesis; peptidoglycan biosynthesis. Its function is as follows. Peptidoglycan polymerase that is essential for cell division. This chain is Probable peptidoglycan glycosyltransferase FtsW, found in Thioalkalivibrio sulfidiphilus (strain HL-EbGR7).